Consider the following 503-residue polypeptide: Type II secretion system ATPase E (503 aa).

The Zn(2+) site is built by Cys397, Cys400, Cys430, and Cys433.

It belongs to the GSP E family. As to quaternary structure, forms homooligomers; most probably hexamers. Interacts with EpsL/GspL. Requires Zn(2+) as cofactor.

Its subcellular location is the cell inner membrane. It catalyses the reaction ATP + H2O + cellular proteinSide 1 = ADP + phosphate + cellular proteinSide 2.. Functionally, ATPase component of the type II secretion system required for the energy-dependent secretion of extracellular factors such as proteases and toxins from the periplasm. Acts as a molecular motor to provide the energy that is required for assembly of the pseudopilus and the extrusion of substrates generated in the cytoplasm. The protein is Type II secretion system ATPase E (epsE) of Vibrio cholerae serotype O1 (strain ATCC 39315 / El Tor Inaba N16961).